Reading from the N-terminus, the 291-residue chain is Light-independent protochlorophyllide reductase iron-sulfur ATP-binding protein (291 aa).

Residues 10 to 15 and lysine 39 contribute to the ATP site; that span reads GIGKST. Serine 14 contacts Mg(2+). [4Fe-4S] cluster contacts are provided by cysteine 95 and cysteine 129. ATP is bound at residue 180–181; that stretch reads NR.

It belongs to the NifH/BchL/ChlL family. Homodimer. Protochlorophyllide reductase is composed of three subunits; ChlL, ChlN and ChlB. It depends on [4Fe-4S] cluster as a cofactor.

It localises to the plastid. The protein localises to the chloroplast. It carries out the reaction chlorophyllide a + oxidized 2[4Fe-4S]-[ferredoxin] + 2 ADP + 2 phosphate = protochlorophyllide a + reduced 2[4Fe-4S]-[ferredoxin] + 2 ATP + 2 H2O. The protein operates within porphyrin-containing compound metabolism; chlorophyll biosynthesis (light-independent). In terms of biological role, component of the dark-operative protochlorophyllide reductase (DPOR) that uses Mg-ATP and reduced ferredoxin to reduce ring D of protochlorophyllide (Pchlide) to form chlorophyllide a (Chlide). This reaction is light-independent. The L component serves as a unique electron donor to the NB-component of the complex, and binds Mg-ATP. In Pinus contorta (Shore pine), this protein is Light-independent protochlorophyllide reductase iron-sulfur ATP-binding protein.